We begin with the raw amino-acid sequence, 450 residues long: MREVISMHVGQAGVQMGNACWELYCLEHGIQPDGQMPSDKTCGGGDDSFNTFFSETGAGKHVPRAIFVDLEPTVIDEVRTGIYRQLFHPEQLITGKEDAANNYARGHYTIGKEIIDIVLDRTRKLADQCTGLQGFLIFHSFGGGTGSGFTSLLMERLSVDYGKKSKLEFAVYPAPQVSTAVVEPYNSILTTHTTLEHSDCAFMVDNEAIYDICRRNLDIERPSYTNLNRLIGQIVSSITASLRFDGALNVDLTEFQTNLVPYPRIHFPLATYAPVISAEKAYHEQLSVADITNACFEPANQMVKCDPRHGKYMACCLLYRGDVVPKDVNSAIAAIKTKRSIQFVDWCPTGFKVGINYQPPTVVPGGDLAKVQRAVCMLSNTTAIAEAWARLDHKFDLMYAKRAFVHWYVGEGMEEGEFSEAREDMAALEKDYEEVGTDSVGEEDEEGEEY.

Gln-11 lines the GTP pocket. Lys-40 is subject to N6-acetyllysine. GTP contacts are provided by Glu-71, Ser-140, Gly-144, Thr-145, Thr-179, Asn-206, and Asn-228. Glu-71 is a binding site for Mg(2+). Glu-254 is an active-site residue. The interval 431 to 450 (DYEEVGTDSVGEEDEEGEEY) is disordered.

The protein belongs to the tubulin family. In terms of assembly, dimer of alpha and beta chains. A typical microtubule is a hollow water-filled tube with an outer diameter of 25 nm and an inner diameter of 15 nM. Alpha-beta heterodimers associate head-to-tail to form protofilaments running lengthwise along the microtubule wall with the beta-tubulin subunit facing the microtubule plus end conferring a structural polarity. Microtubules usually have 13 protofilaments but different protofilament numbers can be found in some organisms and specialized cells. Mg(2+) serves as cofactor. Post-translationally, some glutamate residues at the C-terminus are polyglycylated, resulting in polyglycine chains on the gamma-carboxyl group. Glycylation is mainly limited to tubulin incorporated into axonemes (cilia and flagella) whereas glutamylation is prevalent in neuronal cells, centrioles, axonemes, and the mitotic spindle. Both modifications can coexist on the same protein on adjacent residues, and lowering polyglycylation levels increases polyglutamylation, and reciprocally. The precise function of polyglycylation is still unclear. Some glutamate residues at the C-terminus are polyglutamylated, resulting in polyglutamate chains on the gamma-carboxyl group. Polyglutamylation plays a key role in microtubule severing by spastin (SPAST). SPAST preferentially recognizes and acts on microtubules decorated with short polyglutamate tails: severing activity by SPAST increases as the number of glutamates per tubulin rises from one to eight, but decreases beyond this glutamylation threshold. In terms of processing, acetylation of alpha chains at Lys-40 is located inside the microtubule lumen. This modification has been correlated with increased microtubule stability, intracellular transport and ciliary assembly. Post-translationally, undergoes a tyrosination/detyrosination cycle, the cyclic removal and re-addition of a C-terminal tyrosine residue by the enzymes tubulin tyrosine carboxypeptidase (MATCAP, VASH1 or VASH2) and tubulin tyrosine ligase (TTL), respectively. Tyrosination promotes microtubule interaction with CAP-Gly microtubule plus-end tracking proteins. Tyrosinated tubulins regulate the initiation of dynein-driven motility. In terms of processing, detyrosination is involved in metaphase plate congression by guiding chromosomes during mitosis. Detyrosination increases microtubules-dependent mechanotransduction in dystrophic cardiac and skeletal muscle. In cardiomyocytes, detyrosinated microtubules are required to resist to contractile compression during contraction.

It is found in the cytoplasm. The protein resides in the cytoskeleton. The catalysed reaction is GTP + H2O = GDP + phosphate + H(+). In terms of biological role, tubulin is the major constituent of microtubules, a cylinder consisting of laterally associated linear protofilaments composed of alpha- and beta-tubulin heterodimers. Microtubules grow by the addition of GTP-tubulin dimers to the microtubule end, where a stabilizing cap forms. Below the cap, tubulin dimers are in GDP-bound state, owing to GTPase activity of alpha-tubulin. The polypeptide is Tubulin alpha chain (Oncorhynchus keta (Chum salmon)).